A 205-amino-acid chain; its full sequence is Rho GDP-dissociation inhibitor (205 aa).

The segment covering 1-11 has biased composition (polar residues); that stretch reads MSVNNEVSADQ. The tract at residues 1–31 is disordered; the sequence is MSVNNEVSADQHNPELEDDTFEHGPPVSLGE. A Phosphoserine modification is found at serine 63.

Belongs to the Rho GDI family.

It localises to the cytoplasm. It is found in the nucleus. In terms of biological role, regulates the GDP/GTP exchange reaction of the Rho proteins by inhibiting the dissociation of GDP from them, and the subsequent binding of GTP to them. The chain is Rho GDP-dissociation inhibitor from Schizosaccharomyces pombe (strain 972 / ATCC 24843) (Fission yeast).